We begin with the raw amino-acid sequence, 391 residues long: MSLNPRDVVIVDFGRTPMGRSKGGMHRNTRAEDMSAHLISKLLERNAKVDPAEVEDVIWGCVNQTLEQGWNIARMASLMTQIPHTSAGQTVSRLCGSSMSALHTAAQAIMTGNGDVFVVGGVEHMGHVSMMHGVDPNPHMSLYAAKASGMMGLTAEMLGKMHGITREQQDAFGVRSHQLAHKATVEGKFKDEIIPMQGYDENGFLKLFDYDETIRPETTLESLAALKPAFNPKGGTVTAGTSSQITDGASCMIVMSAQRAQDLGIQPMAVIRSMAVAGVDPAIMGYGPVPATQKALKRAGLGINDIDFFELNEAFAAQALPVLKDLKVLDKMNEKVNLHGGAIALGHPFGCSGARISGTLLNVMKQNGGTFGVSTMCIGLGQGISTVFERV.

The active-site Acyl-thioester intermediate is cysteine 95. Residues histidine 347 and cysteine 377 each act as proton acceptor in the active site.

This sequence belongs to the thiolase-like superfamily. Thiolase family. In terms of assembly, heterotetramer of two alpha chains (FadB) and two beta chains (FadA).

Its subcellular location is the cytoplasm. It carries out the reaction an acyl-CoA + acetyl-CoA = a 3-oxoacyl-CoA + CoA. It functions in the pathway lipid metabolism; fatty acid beta-oxidation. Functionally, catalyzes the final step of fatty acid oxidation in which acetyl-CoA is released and the CoA ester of a fatty acid two carbons shorter is formed. The chain is 3-ketoacyl-CoA thiolase from Pseudomonas fluorescens (strain ATCC BAA-477 / NRRL B-23932 / Pf-5).